We begin with the raw amino-acid sequence, 158 residues long: Auxin-responsive protein IAA31 (158 aa).

The span at 1–40 (MEVSNSCSSFSSSSVDSTKPSPSESSVNLSLSLTFPSTSP) shows a compositional bias: low complexity. The tract at residues 1-49 (MEVSNSCSSFSSSSVDSTKPSPSESSVNLSLSLTFPSTSPQREARQDWP) is disordered. The EAR-like (transcriptional repression) motif lies at 29–33 (LSLSL). In terms of domain architecture, PB1 spans 72-157 (SLFVKVYMEG…RRLKITRPER (86 aa)).

It belongs to the Aux/IAA family. In terms of assembly, homodimers and heterodimers.

Its subcellular location is the nucleus. Its function is as follows. Aux/IAA proteins are short-lived transcriptional factors that function as repressors of early auxin response genes at low auxin concentrations. Repression is thought to result from the interaction with auxin response factors (ARFs), proteins that bind to the auxin-responsive promoter element (AuxRE). Formation of heterodimers with ARF proteins may alter their ability to modulate early auxin response genes expression. The chain is Auxin-responsive protein IAA31 (IAA31) from Arabidopsis thaliana (Mouse-ear cress).